The sequence spans 577 residues: MNPVNATALYISASRLVLNYDPGDPKAFTEINRLLPYFRQSLSCCVCGHLLQDPIAPTNSTCQHYVCKTCKGKKMMMKPSCSWCKDYEQFEENKQLSILVNCYKKLCEYITQTTLARDIIEAVDCSSDILALLNDGSLFCEETEKPSDSSFTLCLTHSPLPSTSEPTADPQASLSPMSESTLSIAIGSSVINGLPTYNGLSIDRFGINIPSPEHPNTIDVCNTVDIKTEDLSDNLPPVCDTVATDLCSTGIDICSFSEDIKPGDSLLLSVEEVLRSLETVSNTEVCCPNLQPNLEATVSNGPFLQLSSQSLSHNVFMSTSPALHGLSCTAATPKVAKLNRKRSRSESDSEKVQPLPISTIIRGPTLGASAPVTVKRESKISLQPIATVPNGGTTPKISKTVLLSTKSMKKSHEHGSKKSHSKSKPGILKKDKAVKEKMPSHHFMPGSPTKTVYKKPQEKKGCKCGRATQNPSVLTCRGQRCPCYSNRKACLDCICRGCQNSYMANGEKKLEAFAVPEKALEQTRLTLGINVTSIAVRNASTSTSVINVTGSPVTTFLAASTHDDKSLDEAIDMRFDC.

Positions 1-116 are sufficient for interaction with MSL1; the sequence is MNPVNATALY…CEYITQTTLA (116 aa). Residues Cys44, Cys47, Cys62, His64, Cys67, Cys70, Cys81, and Cys84 each contribute to the Zn(2+) site. The RING-type zinc-finger motif lies at 44-85; that stretch reads CCVCGHLLQDPIAPTNSTCQHYVCKTCKGKKMMMKPSCSWCK. A Glycyl lysine isopeptide (Lys-Gly) (interchain with G-Cter in SUMO2) cross-link involves residue Lys375. Residues 405–428 are disordered; it reads TKSMKKSHEHGSKKSHSKSKPGIL. The segment covering 407-423 has biased composition (basic residues); the sequence is SMKKSHEHGSKKSHSKS. Position 447 is a phosphoserine (Ser447). Residues 457-508 form the CXC MSL2-type domain; that stretch reads QEKKGCKCGRATQNPSVLTCRGQRCPCYSNRKACLDCICRGCQNSYMANGEK. Zn(2+) contacts are provided by Cys462, Cys464, Cys476, Cys481, Cys483, Cys490, Cys493, Cys495, and Cys498.

This sequence belongs to the MSL2 family. Component of a multisubunit histone acetyltransferase complex (MSL) at least composed of the KAT8/MOF/MYST1, MSL1/hampin, MSL2 and MSL3. Forms a MSL heterotetrameric core with MSL1.

Its subcellular location is the nucleus. It localises to the chromosome. The catalysed reaction is S-ubiquitinyl-[E2 ubiquitin-conjugating enzyme]-L-cysteine + [acceptor protein]-L-lysine = [E2 ubiquitin-conjugating enzyme]-L-cysteine + N(6)-ubiquitinyl-[acceptor protein]-L-lysine.. The protein operates within protein modification; protein ubiquitination. In terms of biological role, non-catalytic component of the MSL histone acetyltransferase complex, a multiprotein complex that mediates the majority of histone H4 acetylation at 'Lys-16' (H4K16ac), an epigenetic mark that prevents chromatin compaction. The MSL complex is required for chromosome stability and genome integrity by maintaining homeostatic levels of H4K16ac. The MSL complex is also involved in gene dosage by promoting up-regulation of genes expressed by the X chromosome. X up-regulation is required to compensate for autosomal biallelic expression. The MSL complex also participates in gene dosage compensation by promoting expression of Tsix non-coding RNA. MSL2 plays a key role in gene dosage by ensuring biallelic expression of a subset of dosage-sensitive genes, including many haploinsufficient genes. Acts by promoting promoter-enhancer contacts, thereby preventing DNA methylation of one allele and creating a methylation-free environment for methylation-sensitive transcription factors such as SP1, KANSL1 and KANSL3. Also acts as an E3 ubiquitin ligase that promotes monoubiquitination of histone H2B at 'Lys-35' (H2BK34Ub), but not that of H2A. This activity is greatly enhanced by heterodimerization with MSL1. H2B ubiquitination in turn stimulates histone H3 methylation at 'Lys-4' (H3K4me) and 'Lys-79' (H3K79me) and leads to gene activation, including that of HOXA9 and MEIS1. This Mus musculus (Mouse) protein is E3 ubiquitin-protein ligase MSL2.